Here is a 632-residue protein sequence, read N- to C-terminus: Basic helix-loop-helix ARNT-like protein 1 (632 aa).

The interval methionine 1 to arginine 39 is disordered. Position 17 is a phosphoserine; by GSK3-beta (serine 17). Residue threonine 21 is modified to Phosphothreonine; by GSK3-beta. Positions asparagine 36 to glycine 41 match the Nuclear localization signal motif. The 54-residue stretch at asparagine 79–leucine 132 folds into the bHLH domain. Serine 85 carries the phosphoserine modification. Serine 97 is modified (phosphoserine; by CK2). The short motif at leucine 149–leucine 159 is the Nuclear export signal 1 element. The 73-residue stretch at serine 150–proline 222 folds into the PAS 1 domain. Lysine 259 participates in a covalent cross-link: Glycyl lysine isopeptide (Lys-Gly) (interchain with G-Cter in SUMO2 and SUMO3). A Glycyl lysine isopeptide (Lys-Gly) (interchain with G-Cter in SUMO); alternate cross-link involves residue lysine 266. Residue lysine 266 forms a Glycyl lysine isopeptide (Lys-Gly) (interchain with G-Cter in SUMO2); alternate linkage. The PAS 2 domain maps to glutamine 333–glutamate 403. The Nuclear export signal 2 signature appears at leucine 367 to leucine 375. A PAC domain is found at asparagine 408–valine 451. Disordered regions lie at residues proline 465–alanine 498 and glycine 517–asparagine 601. Residues arginine 514 to glutamine 594 form an interaction with CIART region. The span at glycine 517–proline 527 shows a compositional bias: low complexity. Position 544 is an N6-acetyllysine (lysine 544).

In terms of assembly, component of the circadian clock oscillator which includes the CRY1/2 proteins, CLOCK or NPAS2, BMAL1 or BMAL2, CSNK1D and/or CSNK1E, TIMELESS and the PER1/2/3 proteins. Forms a heterodimer with CLOCK. The CLOCK-BMAL1 heterodimer is required for E-box-dependent transactivation, for CLOCK nuclear translocation and degradation, and, for phosphorylation of both CLOCK and BMAL1. Part of a nuclear complex which also includes RACK1 and PRKCA; RACK1 and PRKCA are recruited to the complex in a circadian manner. Interacts with NPAS2. Interacts with EZH2. Interacts with SUMO3. Interacts with SIRT1. Interacts with AHR. Interacts with ID1, ID2 and ID3. Interacts with DDX4. Interacts with OGT. Interacts with EED and SUZ12. Interacts with MTA1. Interacts with CIART. Interacts with HSP90. Interacts with KAT2B and EP300. Interacts with BHLHE40/DEC1 and BHLHE41/DEC2. Interacts with RELB and the interaction is enhanced in the presence of CLOCK. Interacts with PER1, PER2, CRY1 and CRY2 and this interaction requires a translocation to the nucleus. Interaction of the CLOCK-BMAL1 heterodimer with PER or CRY inhibits transcription activation. Interaction of the CLOCK-BMAL1 with CRY1 is independent of DNA but with PER2 is off DNA. The CLOCK-BMAL1 heterodimer interacts with GSK3B. Interacts with KDM5A. Interacts with KMT2A; in a circadian manner. Interacts with UBE3A. Interacts with PRKCG. Interacts with MAGEL2. Interacts with NCOA2. Interacts with THRAP3. The CLOCK-BMAL1 heterodimer interacts with PASD1. Interacts with PASD1. Interacts with USP9X. Interacts with PIWIL2 (via PIWI domain). Interacts with HDAC3. Interacts with HNF4A. Ubiquitinated, leading to its proteasomal degradation. Deubiquitinated by USP9X. Post-translationally, O-glycosylated; contains O-GlcNAc. O-glycosylation by OGT prevents protein degradation by inhibiting ubiquitination. It also stabilizes the CLOCK-BMAL1 heterodimer thereby increasing CLOCK-BMAL1-mediated transcription of genes in the negative loop of the circadian clock such as PER1/2/3 and CRY1/2. In terms of processing, acetylated on Lys-544 by CLOCK during the repression phase of the circadian cycle. Acetylation facilitates recruitment of CRY1 protein and initiates the repression phase of the circadian cycle. Acetylated at Lys-544 by KAT5 during the activation phase of the cycle, leading to recruitment of the positive transcription elongation factor b (P-TEFb) and BRD4, followed by productive elongation of circadian transcripts. Deacetylated by SIRT1, which may result in decreased protein stability. Phosphorylated upon dimerization with CLOCK. Phosphorylation enhances the transcriptional activity, alters the subcellular localization and decreases the stability of the CLOCK-BMAL1 heterodimer by promoting its degradation. Phosphorylation shows circadian variations in the liver with a peak between CT10 to CT14. Phosphorylation at Ser-97 by CK2 is essential for its nuclear localization, its interaction with CLOCK and controls CLOCK nuclear entry. Dephosphorylation at Ser-85 is important for dimerization with CLOCK and transcriptional activity. Post-translationally, sumoylated on Lys-266 upon dimerization with CLOCK. Predominantly conjugated to poly-SUMO2/3 rather than SUMO1 and the level of these conjugates undergo rhythmic variation, peaking at CT9-CT12. Sumoylation localizes it exclusively to the PML body and promotes its ubiquitination in the PML body, ubiquitin-dependent proteasomal degradation and the transcriptional activity of the CLOCK-BMAL1 heterodimer. In terms of processing, undergoes lysosome-mediated degradation in a time-dependent manner in the liver. As to expression, expressed in liver and testis (at protein level). Expressed in the suprachiasmatic nucleus (SCN) in a circadian manner.

Its subcellular location is the nucleus. The protein localises to the cytoplasm. It is found in the PML body. With respect to regulation, the redox state of the cell can modulate the transcriptional activity of the CLOCK-BMAL1 and NPAS2-BMAL1 heterodimers; NADH and NADPH enhance the DNA-binding activity of the heterodimers. Its function is as follows. Transcriptional activator which forms a core component of the circadian clock. The circadian clock, an internal time-keeping system, regulates various physiological processes through the generation of approximately 24 hour circadian rhythms in gene expression, which are translated into rhythms in metabolism and behavior. It is derived from the Latin roots 'circa' (about) and 'diem' (day) and acts as an important regulator of a wide array of physiological functions including metabolism, sleep, body temperature, blood pressure, endocrine, immune, cardiovascular, and renal function. Consists of two major components: the central clock, residing in the suprachiasmatic nucleus (SCN) of the brain, and the peripheral clocks that are present in nearly every tissue and organ system. Both the central and peripheral clocks can be reset by environmental cues, also known as Zeitgebers (German for 'timegivers'). The predominant Zeitgeber for the central clock is light, which is sensed by retina and signals directly to the SCN. The central clock entrains the peripheral clocks through neuronal and hormonal signals, body temperature and feeding-related cues, aligning all clocks with the external light/dark cycle. Circadian rhythms allow an organism to achieve temporal homeostasis with its environment at the molecular level by regulating gene expression to create a peak of protein expression once every 24 hours to control when a particular physiological process is most active with respect to the solar day. Transcription and translation of core clock components (CLOCK, NPAS2, BMAL1, BMAL2, PER1, PER2, PER3, CRY1 and CRY2) plays a critical role in rhythm generation, whereas delays imposed by post-translational modifications (PTMs) are important for determining the period (tau) of the rhythms (tau refers to the period of a rhythm and is the length, in time, of one complete cycle). A diurnal rhythm is synchronized with the day/night cycle, while the ultradian and infradian rhythms have a period shorter and longer than 24 hours, respectively. Disruptions in the circadian rhythms contribute to the pathology of cardiovascular diseases, cancer, metabolic syndromes and aging. A transcription/translation feedback loop (TTFL) forms the core of the molecular circadian clock mechanism. Transcription factors, CLOCK or NPAS2 and BMAL1 or BMAL2, form the positive limb of the feedback loop, act in the form of a heterodimer and activate the transcription of core clock genes and clock-controlled genes (involved in key metabolic processes), harboring E-box elements (5'-CACGTG-3') within their promoters. The core clock genes: PER1/2/3 and CRY1/2 which are transcriptional repressors form the negative limb of the feedback loop and interact with the CLOCK|NPAS2-BMAL1|BMAL2 heterodimer inhibiting its activity and thereby negatively regulating their own expression. This heterodimer also activates nuclear receptors NR1D1/2 and RORA/B/G, which form a second feedback loop and which activate and repress BMAL1 transcription, respectively. BMAL1 positively regulates myogenesis and negatively regulates adipogenesis via the transcriptional control of the genes of the canonical Wnt signaling pathway. Plays a role in normal pancreatic beta-cell function; regulates glucose-stimulated insulin secretion via the regulation of antioxidant genes NFE2L2/NRF2 and its targets SESN2, PRDX3, CCLC and CCLM. Negatively regulates the mTORC1 signaling pathway; regulates the expression of MTOR and DEPTOR. Controls diurnal oscillations of Ly6C inflammatory monocytes; rhythmic recruitment of the PRC2 complex imparts diurnal variation to chemokine expression that is necessary to sustain Ly6C monocyte rhythms. Regulates the expression of HSD3B2, STAR, PTGS2, CYP11A1, CYP19A1 and LHCGR in the ovary and also the genes involved in hair growth. Plays an important role in adult hippocampal neurogenesis by regulating the timely entry of neural stem/progenitor cells (NSPCs) into the cell cycle and the number of cell divisions that take place prior to cell-cycle exit. Regulates the circadian expression of CIART and KLF11. The CLOCK-BMAL1 heterodimer regulates the circadian expression of SERPINE1/PAI1, VWF, B3, CCRN4L/NOC, NAMPT, DBP, MYOD1, PPARGC1A, PPARGC1B, SIRT1, GYS2, F7, NGFR, GNRHR, BHLHE40/DEC1, ATF4, MTA1, KLF10 and also genes implicated in glucose and lipid metabolism. Promotes rhythmic chromatin opening, regulating the DNA accessibility of other transcription factors. May play a role in spermatogenesis; contributes to the chromatoid body assembly and physiology. The NPAS2-BMAL1 heterodimer positively regulates the expression of MAOA, F7 and LDHA and modulates the circadian rhythm of daytime contrast sensitivity by regulating the rhythmic expression of adenylate cyclase type 1 (ADCY1) in the retina. The preferred binding motif for the CLOCK-BMAL1 heterodimer is 5'-CACGTGA-3', which contains a flanking adenine nucleotide at the 3-prime end of the canonical 6-nucleotide E-box sequence. CLOCK specifically binds to the half-site 5'-CAC-3', while BMAL1 binds to the half-site 5'-GTGA-3'. The CLOCK-BMAL1 heterodimer also recognizes the non-canonical E-box motifs 5'-AACGTGA-3' and 5'-CATGTGA-3'. Essential for the rhythmic interaction of CLOCK with ASS1 and plays a critical role in positively regulating CLOCK-mediated acetylation of ASS1. Plays a role in protecting against lethal sepsis by limiting the expression of immune checkpoint protein CD274 in macrophages in a PKM2-dependent manner. Regulates the diurnal rhythms of skeletal muscle metabolism via transcriptional activation of genes promoting triglyceride synthesis (DGAT2) and metabolic efficiency (COQ10B). The polypeptide is Basic helix-loop-helix ARNT-like protein 1 (Bmal1) (Mus musculus (Mouse)).